The sequence spans 153 residues: Endoribonuclease YbeY (153 aa).

Histidine 118, histidine 122, and histidine 128 together coordinate Zn(2+).

It belongs to the endoribonuclease YbeY family. Requires Zn(2+) as cofactor.

It is found in the cytoplasm. Single strand-specific metallo-endoribonuclease involved in late-stage 70S ribosome quality control and in maturation of the 3' terminus of the 16S rRNA. The chain is Endoribonuclease YbeY from Staphylococcus haemolyticus (strain JCSC1435).